A 434-amino-acid chain; its full sequence is Trigger factor (434 aa).

In terms of domain architecture, PPIase FKBP-type spans 162–247 (GDKINISLIA…FNTVEQAKLP (86 aa)).

The protein belongs to the FKBP-type PPIase family. Tig subfamily.

The protein localises to the cytoplasm. The catalysed reaction is [protein]-peptidylproline (omega=180) = [protein]-peptidylproline (omega=0). Functionally, involved in protein export. Acts as a chaperone by maintaining the newly synthesized protein in an open conformation. Functions as a peptidyl-prolyl cis-trans isomerase. The polypeptide is Trigger factor (Methylobacillus flagellatus (strain ATCC 51484 / DSM 6875 / VKM B-1610 / KT)).